Reading from the N-terminus, the 417-residue chain is UDP-N-acetylglucosamine 1-carboxyvinyltransferase (417 aa).

Phosphoenolpyruvate is bound at residue 22-23 (KN). Position 93 (R93) interacts with UDP-N-acetyl-alpha-D-glucosamine. C117 serves as the catalytic Proton donor. 2-(S-cysteinyl)pyruvic acid O-phosphothioketal is present on C117. UDP-N-acetyl-alpha-D-glucosamine contacts are provided by residues 122-126 (RPVDQ), D305, and I327.

It belongs to the EPSP synthase family. MurA subfamily.

The protein resides in the cytoplasm. It carries out the reaction phosphoenolpyruvate + UDP-N-acetyl-alpha-D-glucosamine = UDP-N-acetyl-3-O-(1-carboxyvinyl)-alpha-D-glucosamine + phosphate. It functions in the pathway cell wall biogenesis; peptidoglycan biosynthesis. Cell wall formation. Adds enolpyruvyl to UDP-N-acetylglucosamine. The polypeptide is UDP-N-acetylglucosamine 1-carboxyvinyltransferase (Dechloromonas aromatica (strain RCB)).